We begin with the raw amino-acid sequence, 526 residues long: Putative bifunctional polymyxin resistance protein ArnA (526 aa).

The interval M1 to L170 is formyltransferase ArnAFT. A (6R)-10-formyltetrahydrofolate-binding site is contributed by V2–D6. Residues R180–S526 are dehydrogenase ArnADH. NAD(+)-binding positions include D213 and D234–I235. UDP-alpha-D-glucuronate is bound by residues A259, Y264, and T298–S299. The Proton acceptor; for decarboxylase activity role is filled by E300. Residues R326, N358, K392 to R401, and Y479 contribute to the UDP-alpha-D-glucuronate site. R485 acts as the Proton donor; for decarboxylase activity in catalysis.

This sequence in the N-terminal section; belongs to the Fmt family. UDP-L-Ara4N formyltransferase subfamily. In the C-terminal section; belongs to the NAD(P)-dependent epimerase/dehydratase family. UDP-glucuronic acid decarboxylase subfamily. As to quaternary structure, homohexamer, formed by a dimer of trimers.

The enzyme catalyses UDP-alpha-D-glucuronate + NAD(+) = UDP-beta-L-threo-pentopyranos-4-ulose + CO2 + NADH. The catalysed reaction is UDP-4-amino-4-deoxy-beta-L-arabinose + (6R)-10-formyltetrahydrofolate = UDP-4-deoxy-4-formamido-beta-L-arabinose + (6S)-5,6,7,8-tetrahydrofolate + H(+). It functions in the pathway nucleotide-sugar biosynthesis; UDP-4-deoxy-4-formamido-beta-L-arabinose biosynthesis; UDP-4-deoxy-4-formamido-beta-L-arabinose from UDP-alpha-D-glucuronate: step 1/3. Its pathway is nucleotide-sugar biosynthesis; UDP-4-deoxy-4-formamido-beta-L-arabinose biosynthesis; UDP-4-deoxy-4-formamido-beta-L-arabinose from UDP-alpha-D-glucuronate: step 3/3. The protein operates within bacterial outer membrane biogenesis; lipopolysaccharide biosynthesis. Functionally, bifunctional enzyme that catalyzes the oxidative decarboxylation of UDP-glucuronic acid (UDP-GlcUA) to UDP-4-keto-arabinose (UDP-Ara4O) and the addition of a formyl group to UDP-4-amino-4-deoxy-L-arabinose (UDP-L-Ara4N) to form UDP-L-4-formamido-arabinose (UDP-L-Ara4FN). The modified arabinose is attached to lipid A and is required for resistance to polymyxin and cationic antimicrobial peptides. This chain is Putative bifunctional polymyxin resistance protein ArnA (arnA), found in Shigella boydii serotype 18 (strain CDC 3083-94 / BS512).